Reading from the N-terminus, the 62-residue chain is Photosystem II reaction center protein Z (62 aa).

Helical transmembrane passes span 8-28 (AVFA…LVFA) and 41-61 (FSGT…NSLI).

It belongs to the PsbZ family. PSII is composed of 1 copy each of membrane proteins PsbA, PsbB, PsbC, PsbD, PsbE, PsbF, PsbH, PsbI, PsbJ, PsbK, PsbL, PsbM, PsbT, PsbY, PsbZ, Psb30/Ycf12, at least 3 peripheral proteins of the oxygen-evolving complex and a large number of cofactors. It forms dimeric complexes.

Its subcellular location is the plastid. It is found in the chloroplast thylakoid membrane. Its function is as follows. May control the interaction of photosystem II (PSII) cores with the light-harvesting antenna, regulates electron flow through the 2 photosystem reaction centers. PSII is a light-driven water plastoquinone oxidoreductase, using light energy to abstract electrons from H(2)O, generating a proton gradient subsequently used for ATP formation. This is Photosystem II reaction center protein Z from Oryza nivara (Indian wild rice).